A 79-amino-acid chain; its full sequence is DNA-directed RNA polymerase subunit omega (79 aa).

Belongs to the RNA polymerase subunit omega family. As to quaternary structure, in cyanobacteria the RNAP catalytic core is composed of 2 alpha, 1 beta, 1 beta', 1 gamma and 1 omega subunit. When a sigma factor is associated with the core the holoenzyme is formed, which can initiate transcription.

It catalyses the reaction RNA(n) + a ribonucleoside 5'-triphosphate = RNA(n+1) + diphosphate. In terms of biological role, promotes RNA polymerase assembly. Latches the N- and C-terminal regions of the beta' subunit thereby facilitating its interaction with the beta and alpha subunits. This Synechococcus sp. (strain JA-2-3B'a(2-13)) (Cyanobacteria bacterium Yellowstone B-Prime) protein is DNA-directed RNA polymerase subunit omega.